The following is a 72-amino-acid chain: Translation initiation factor IF-1 (72 aa).

The region spanning Met1–Lys72 is the S1-like domain.

This sequence belongs to the IF-1 family. In terms of assembly, component of the 30S ribosomal translation pre-initiation complex which assembles on the 30S ribosome in the order IF-2 and IF-3, IF-1 and N-formylmethionyl-tRNA(fMet); mRNA recruitment can occur at any time during PIC assembly.

It localises to the cytoplasm. In terms of biological role, one of the essential components for the initiation of protein synthesis. Stabilizes the binding of IF-2 and IF-3 on the 30S subunit to which N-formylmethionyl-tRNA(fMet) subsequently binds. Helps modulate mRNA selection, yielding the 30S pre-initiation complex (PIC). Upon addition of the 50S ribosomal subunit IF-1, IF-2 and IF-3 are released leaving the mature 70S translation initiation complex. The polypeptide is Translation initiation factor IF-1 (Listeria innocua serovar 6a (strain ATCC BAA-680 / CLIP 11262)).